A 388-amino-acid chain; its full sequence is Succinate--CoA ligase [ADP-forming] subunit beta (388 aa).

The region spanning 9-244 (KQLFARYGMP…LSQEDERESR (236 aa)) is the ATP-grasp domain. Residues Lys46, 53–55 (GRG), Glu99, Thr102, and Glu107 contribute to the ATP site. Mg(2+) contacts are provided by Asn199 and Asp213. Substrate is bound by residues Asn264 and 321–323 (GIV).

This sequence belongs to the succinate/malate CoA ligase beta subunit family. In terms of assembly, heterotetramer of two alpha and two beta subunits. The cofactor is Mg(2+).

The enzyme catalyses succinate + ATP + CoA = succinyl-CoA + ADP + phosphate. It carries out the reaction GTP + succinate + CoA = succinyl-CoA + GDP + phosphate. The protein operates within carbohydrate metabolism; tricarboxylic acid cycle; succinate from succinyl-CoA (ligase route): step 1/1. Its function is as follows. Succinyl-CoA synthetase functions in the citric acid cycle (TCA), coupling the hydrolysis of succinyl-CoA to the synthesis of either ATP or GTP and thus represents the only step of substrate-level phosphorylation in the TCA. The beta subunit provides nucleotide specificity of the enzyme and binds the substrate succinate, while the binding sites for coenzyme A and phosphate are found in the alpha subunit. The chain is Succinate--CoA ligase [ADP-forming] subunit beta from Serratia proteamaculans (strain 568).